A 775-amino-acid polypeptide reads, in one-letter code: ATP-dependent 6-phosphofructokinase 2 (775 aa).

The segment at 1–390 is N-terminal catalytic PFK domain 1; that stretch reads MTNTILDTYS…YHSAYRHLNT (390 aa). Residues Gly25, 88–89, and 118–121 each bind ATP; these read RC and GDGS. Asp119 provides a ligand contact to Mg(2+). Substrate is bound by residues 164 to 166, Arg201, 208 to 210, Glu264, Arg292, and 298 to 301; these read SID, MGR, and HIQR. The active-site Proton acceptor is Asp166. The tract at residues 391–404 is interdomain linker; that stretch reads SDHPKMVLPEDKRM. Residues 405–775 are C-terminal regulatory PFK domain 2; it reads RVAIIHVGAP…GRSSLYAIPN (371 aa). Beta-D-fructose 2,6-bisphosphate contacts are provided by residues 537–541, 582–584, Asp640, and 672–675; these read SMSNN, QGA, and HFQQ.

It belongs to the phosphofructokinase type A (PFKA) family. ATP-dependent PFK group I subfamily. Eukaryotic two domain clade 'E' sub-subfamily. Homotetramer. Requires Mg(2+) as cofactor.

The protein resides in the cytoplasm. It catalyses the reaction beta-D-fructose 6-phosphate + ATP = beta-D-fructose 1,6-bisphosphate + ADP + H(+). The protein operates within carbohydrate degradation; glycolysis; D-glyceraldehyde 3-phosphate and glycerone phosphate from D-glucose: step 3/4. Allosterically activated by ADP, AMP, or fructose 2,6-bisphosphate, and allosterically inhibited by ATP or citrate. Its function is as follows. Catalyzes the phosphorylation of D-fructose 6-phosphate to fructose 1,6-bisphosphate by ATP, the first committing step of glycolysis. The polypeptide is ATP-dependent 6-phosphofructokinase 2 (pfkB) (Aspergillus oryzae (strain ATCC 42149 / RIB 40) (Yellow koji mold)).